A 146-amino-acid chain; its full sequence is Mitochondrial DnaJ homolog 2 (146 aa).

The J domain occupies 85–146; it reads EALLILDISA…LERSVLLRKR (62 aa).

In terms of assembly, interacts with PAM16/TIM16 and is recruited by the PAM complex.

It localises to the mitochondrion inner membrane. Its function is as follows. Plays a role in mitochondrial biogenesis and protein folding. Participates in the translocation of transit peptide-containing proteins from the inner membrane into the mitochondrial matrix in an ATP-dependent manner, probably by stimulating activity of mtHSP70 (SSC1). This is Mitochondrial DnaJ homolog 2 (MDJ2) from Saccharomyces cerevisiae (strain ATCC 204508 / S288c) (Baker's yeast).